We begin with the raw amino-acid sequence, 29 residues long: Cyclotide mela-7 (29 aa).

Residues 1–29 (GLPTCGETCFKGKCYTPGCSCSYPICKKN) constitute a cross-link (cyclopeptide (Gly-Asn)). Disulfide bonds link Cys5/Cys19, Cys9/Cys21, and Cys14/Cys26.

This is a cyclic peptide. In terms of processing, contains 3 disulfide bonds.

Probably participates in a plant defense mechanism (Potential). Binds to and induces leakage in phospholipd membranes, particularly ones containing 1-palmitoyl-2-oleophosphatidylethanolamine (POPE). In vitro, displays cytotoxicity against cultured cells but no hemolytic activity towards fresh erythrocytes. Not active against Gram-negative bacterium E.coli ATCC 25922 or Gram-positive bacterium S.aureus ATCC 25923 up to a concentration of 64 uM. The chain is Cyclotide mela-7 from Melicytus latifolius (Norfolk Island mahoe).